A 499-amino-acid chain; its full sequence is Eukaryotic peptide chain release factor GTP-binding subunit ERF3A (499 aa).

The segment at Met1–Ala69 is disordered. Residues Arg41 to Met50 are compositionally biased toward basic and acidic residues. A tr-type G domain is found at Lys72–Val298. The tract at residues Gly81–Ser88 is G1. Residue Asp84–Thr89 participates in GTP binding. The tract at residues Gly137–Glu141 is G2. The segment at Asp158–Gly161 is G3. Residues Asn220 to Asp223 and Ser262 to Leu264 each bind GTP. Residues Asn220–Asp223 are G4. Residues Ser262–Leu264 are G5.

The protein belongs to the TRAFAC class translation factor GTPase superfamily. Classic translation factor GTPase family. ERF3 subfamily. As to quaternary structure, component of the eRF1-eRF3-GTP ternary complex, composed of ETF1/ERF1 and ERF3 (GSPT1/ERF3A or GSPT2/ERF3B) and GTP. Component of the transient SURF (SMG1-UPF1-eRF1-eRF3) complex. The ETF1-GSPT1 complex interacts with JMJD4. Interacts with PABPC1. Interacts with SHFL.

It carries out the reaction GTP + H2O = GDP + phosphate + H(+). GTPase component of the eRF1-eRF3-GTP ternary complex, a ternary complex that mediates translation termination in response to the termination codons UAA, UAG and UGA. GSPT1/ERF3A mediates ETF1/ERF1 delivery to stop codons: The eRF1-eRF3-GTP complex binds to a stop codon in the ribosomal A-site. GTP hydrolysis by GSPT1/ERF3A induces a conformational change that leads to its dissociation, permitting ETF1/ERF1 to accommodate fully in the A-site. Component of the transient SURF complex which recruits UPF1 to stalled ribosomes in the context of nonsense-mediated decay (NMD) of mRNAs containing premature stop codons. Required for SHFL-mediated translation termination which inhibits programmed ribosomal frameshifting (-1PRF) of mRNA from viruses and cellular genes. The chain is Eukaryotic peptide chain release factor GTP-binding subunit ERF3A (GSPT1) from Homo sapiens (Human).